The sequence spans 158 residues: Sec-independent protein translocase protein TatB (158 aa).

The helical transmembrane segment at 1–21 (MFDIGWSELLVIGVVALVVVG) threads the bilayer. The disordered stretch occupies residues 73–158 (RSMGLDAMKQ…PAPAEPKSNA (86 aa)). Residues 83–92 (AADRFEKWDP) show a composition bias toward basic and acidic residues. 2 stretches are compositionally biased toward low complexity: residues 94–132 (KPQQ…SEPA) and 138–158 (APAA…KSNA).

This sequence belongs to the TatB family. In terms of assembly, the Tat system comprises two distinct complexes: a TatABC complex, containing multiple copies of TatA, TatB and TatC subunits, and a separate TatA complex, containing only TatA subunits. Substrates initially bind to the TatABC complex, which probably triggers association of the separate TatA complex to form the active translocon.

The protein localises to the cell inner membrane. In terms of biological role, part of the twin-arginine translocation (Tat) system that transports large folded proteins containing a characteristic twin-arginine motif in their signal peptide across membranes. Together with TatC, TatB is part of a receptor directly interacting with Tat signal peptides. TatB may form an oligomeric binding site that transiently accommodates folded Tat precursor proteins before their translocation. The protein is Sec-independent protein translocase protein TatB of Cereibacter sphaeroides (strain ATCC 17029 / ATH 2.4.9) (Rhodobacter sphaeroides).